Here is a 442-residue protein sequence, read N- to C-terminus: Casein kinase 1-like protein 10 (442 aa).

The 270-residue stretch at 9 to 278 (FKLGRKIGSG…LKRLFRDLFI (270 aa)) folds into the Protein kinase domain. ATP contacts are provided by residues 15-23 (IGSGSFGEL) and K38. Catalysis depends on D128, which acts as the Proton acceptor. Disordered regions lie at residues 299–323 (GSIS…ERNE) and 381–421 (AVMS…LSAR). Positions 305–317 (RPNPKPALDPPGP) are enriched in pro residues. The span at 384–394 (SSSQPGSSGEL) shows a compositional bias: low complexity. The span at 400–417 (SKLFSSSAQKIQPVQETK) shows a compositional bias: polar residues.

This sequence belongs to the protein kinase superfamily. CK1 Ser/Thr protein kinase family. Casein kinase I subfamily. Monomer. Autophosphorylated.

It is found in the cytoplasm. Its subcellular location is the cell junction. The protein resides in the plasmodesma. It catalyses the reaction L-seryl-[protein] + ATP = O-phospho-L-seryl-[protein] + ADP + H(+). The enzyme catalyses L-threonyl-[protein] + ATP = O-phospho-L-threonyl-[protein] + ADP + H(+). Casein kinases are operationally defined by their preferential utilization of acidic proteins such as caseins as substrates. It can phosphorylate a large number of proteins. The sequence is that of Casein kinase 1-like protein 10 from Arabidopsis thaliana (Mouse-ear cress).